The primary structure comprises 617 residues: ATP-dependent rRNA helicase SPB4 (617 aa).

Positions 7-35 (WADLDYELQPWIKKAINVSGFDSMTPVQA) match the Q motif motif. The region spanning 38-224 (IPMFAKNKDV…KTGLRNPVKI (187 aa)) is the Helicase ATP-binding domain. 51 to 58 (SVTGSGKT) is a binding site for ATP. Positions 172–175 (DEAD) match the DEAD box motif. A Helicase C-terminal domain is found at 252–406 (NLIHIMNNIR…ETDINKNKIS (155 aa)).

The protein belongs to the DEAD box helicase family. DDX55/SPB4 subfamily. In terms of assembly, component of pre-60S ribosomal complexes.

Its subcellular location is the nucleus. It localises to the nucleolus. The catalysed reaction is ATP + H2O = ADP + phosphate + H(+). ATP-binding RNA helicase involved in the biogenesis of 60S ribosomal subunits. Binds 90S pre-ribosomal particles and dissociates from pre-60S ribosomal particles after processing of 27SB pre-rRNA. Required for the normal formation of 18S rRNA through the processing of pre-rRNAs at sites A0, A1 and A2, and the normal formation of 25S and 5.8S rRNAs through the processing of pre-rRNAs at sites C1 and C2. This is ATP-dependent rRNA helicase SPB4 from Candida glabrata (strain ATCC 2001 / BCRC 20586 / JCM 3761 / NBRC 0622 / NRRL Y-65 / CBS 138) (Yeast).